Reading from the N-terminus, the 446-residue chain is MANPLPPRPDLIAAVATAPGRGGVGVVRVSGPDVGPLAVAILGRLPEPRHVTYCRFLDRAGAPLDEGIALYFAAPHSFTGEHVLELQGHGGPVVLDLILQRCLELGARLAEPGEFSRRAFLNGKLDLAQAEAVADLIDAASAEAARSALRSLSGEFSARIDELVEQLVRLRTLVEATLDFPDEEIDFLEQADAFGRLKAIGTSVAAVRSQARQGVLLREGLTVVLVGQPNVGKSSLLNRLAGFDAAIVTEIAGTTRDTVREAIQIEGVPIHVIDTAGLRETSDPIEQLGIARSWEAVEKADVALLLVDAAHGVGAHEAQILAKLPDVVRLTVHNKIDVAGEAPRATADEIWLSAKSGEGVDLLRAKLLQAAGWQAAGEGAFMARTRHLDALDRAARHIEQAGAVARQLELFAEELRLAQAALAEITGEFSADALLGEIFGSFCIGK.

(6S)-5-formyl-5,6,7,8-tetrahydrofolate is bound by residues Arg-28, Glu-85, and Lys-124. The region spanning 220–372 (GLTVVLVGQP…LRAKLLQAAG (153 aa)) is the TrmE-type G domain. K(+) is bound at residue Asn-230. GTP contacts are provided by residues 230–235 (NVGKSS), 249–255 (TEIAGTT), and 274–277 (DTAG). Ser-234 is a Mg(2+) binding site. Thr-249, Ile-251, and Thr-254 together coordinate K(+). Thr-255 contacts Mg(2+). Lys-446 contacts (6S)-5-formyl-5,6,7,8-tetrahydrofolate.

This sequence belongs to the TRAFAC class TrmE-Era-EngA-EngB-Septin-like GTPase superfamily. TrmE GTPase family. In terms of assembly, homodimer. Heterotetramer of two MnmE and two MnmG subunits. K(+) serves as cofactor.

It localises to the cytoplasm. Functionally, exhibits a very high intrinsic GTPase hydrolysis rate. Involved in the addition of a carboxymethylaminomethyl (cmnm) group at the wobble position (U34) of certain tRNAs, forming tRNA-cmnm(5)s(2)U34. This chain is tRNA modification GTPase MnmE, found in Thiobacillus denitrificans (strain ATCC 25259 / T1).